The primary structure comprises 372 residues: Caytaxin (372 aa).

Residues 1–58 are disordered; that stretch reads MGTTEATLRMENVDVRDEWQDEDLPRPLPEDTGVERLGGAVEDSSSPPSTLNLSGAHR. Over residues 11–29 the composition is skewed to basic and acidic residues; the sequence is ENVDVRDEWQDEDLPRPLP. The span at 43–53 shows a compositional bias: polar residues; that stretch reads DSSSPPSTLNL. Position 54 is a phosphoserine (Ser-54). The segment at 115–120 is required for interaction with KLC1; that stretch reads ELEWED. Residues 171 to 328 enclose the CRAL-TRIO domain; sequence IRPYMKVVTH…CVLQYEEQRL (158 aa). Residues 190-372 are mediates interaction with GLS; that stretch reads AIIVFAACFL…ATEDQETSMS (183 aa). A disordered region spans residues 329–372; sequence RAKRESTRPPQPEFLLPRSEEKPETVEEEDRAAEATEDQETSMS. A compositionally biased stretch (acidic residues) spans 354–372; that stretch reads VEEEDRAAEATEDQETSMS.

In terms of assembly, interacts with KLC1; may link mitochondria to KLC1 and regulate mitochondria localization into neuron projections. Interacts with GLS; the interaction is direct and may control GLS localization, negatively regulating its activity. Interacts with PIN1 (via WW domain); upon NGF stimulation. The interaction with PIN1 and GLS is competitive. In terms of processing, cleaved by CASP3 and CASP7. The potential C-terminal product released by CASP3 cleavage may inhibit the ERK signaling pathway through MAP2K2. Post-translationally, may be ubiquitinated by STUB1. In terms of tissue distribution, neuronal tissues specific. Strongly expressed in brain. Expressed in virtually all parts of the adult brain, including cortex, cerebellum and olfactory bulbs. Enriched in hippocampus, cerebellar cortex, deep cerebellar nuclei, and pontine nuclei (at protein level).

Its subcellular location is the cell projection. It localises to the axon. The protein localises to the dendrite. The protein resides in the presynapse. It is found in the mitochondrion. Its subcellular location is the growth cone. It localises to the cytoplasm. Functions in the development of neural tissues, particularly the postnatal maturation of the cerebellar cortex. May play a role in neurotransmission through regulation of glutaminase/GLS, an enzyme responsible for the production in neurons of the glutamate neurotransmitter. Alternatively, may regulate the localization of mitochondria within axons and dendrites. In Mus musculus (Mouse), this protein is Caytaxin (Atcay).